The following is a 690-amino-acid chain: Eukaryotic translation initiation factor 3 subunit B (690 aa).

The span at 1–11 (MAKKKSEEHSG) shows a compositional bias: basic and acidic residues. The disordered stretch occupies residues 1–36 (MAKKKSEEHSGADANDSDYQEEPNFEDPPGFVDNIS). Acidic residues predominate over residues 15 to 25 (NDSDYQEEPNF). Positions 57 to 141 (SVVVVDNIPK…HTFAVNLFTD (85 aa)) constitute an RRM domain. WD repeat units lie at residues 207–246 (TRERFTDTFVKWSPLGTYVVTFHKPGVAIWGGSSFQKIQK), 293–331 (DGMSVLSMFRWSHDDKFVARMGENSIHIYETPSFYLLDL), 334–369 (IKIPGIRGFSWSPTDNVIAYWVEEQNQIPARVTLME), 442–484 (EIRE…KPSL), and 530–575 (PDHF…IKRT). Residues 595–645 (EEKQKEIKKNLKKYYAAFEQKDRLRLTRASKELLEKRSQLRETFMEYRNKR) adopt a coiled-coil conformation.

It belongs to the eIF-3 subunit B family. Component of the eukaryotic translation initiation factor 3 (eIF-3) complex. The eIF-3 complex interacts with pix. Interacts with mxt.

It is found in the cytoplasm. Its function is as follows. RNA-binding component of the eukaryotic translation initiation factor 3 (eIF-3) complex, which is involved in protein synthesis of a specialized repertoire of mRNAs and, together with other initiation factors, stimulates binding of mRNA and methionyl-tRNAi to the 40S ribosome. The eIF-3 complex specifically targets and initiates translation of a subset of mRNAs involved in cell proliferation. This is Eukaryotic translation initiation factor 3 subunit B from Drosophila simulans (Fruit fly).